Here is a 261-residue protein sequence, read N- to C-terminus: WW domain-binding protein 2 (261 aa).

Residues 1 to 84 (MALNKNHSEG…YLMKDCEIKQ (84 aa)) form the GRAM domain. Position 192 is a phosphotyrosine (Y192). The PPxY motif 1 motif lies at 196-200 (PPPPY). The span at 196-209 (PPPPYPGPMEPPVS) shows a compositional bias: pro residues. Positions 196-261 (PPPPYPGPME…YYPPEDKKTQ (66 aa)) are disordered. Positions 210 to 230 (GPSAPATPAAEAKAAEAAASA) are enriched in low complexity. Residue Y231 is modified to Phosphotyrosine. Residues 245–254 (SQPPPPPYYP) are compositionally biased toward pro residues. The PPxY motif 2 motif lies at 248–252 (PPPPY).

As to quaternary structure, binds to the WW domain of YAP1, WWP1 and WWP2. Interacts with NEDD4. Interacts with ESR1 and UBE3A. In terms of processing, phosphorylated in repsonse to EGF as well as estrogen and progesterone hormones. Tyr-192 and Tyr-231 are phosphorylated by YES and SRC inducing nuclear translocation. In terms of tissue distribution, expressed in the ear and the eye. Isoform 1 is expressed in brain, inner ear and organ of Corti. Isoform 2 is only detected in brain.

The protein resides in the cytoplasm. It localises to the nucleus. Acts as a transcriptional coactivator of estrogen and progesterone receptors (ESR1 and PGR) upon hormone activation. In presence of estrogen, binds to ESR1-responsive promoters. Synergizes with YAP1 to enhance PGR activity. Modulates expression of post-synaptic scaffolding proteins via regulation of ESR1, ESR2 and PGR. The protein is WW domain-binding protein 2 (Wbp2) of Mus musculus (Mouse).